We begin with the raw amino-acid sequence, 483 residues long: ATP synthase subunit beta (483 aa).

Glycine 167–threonine 174 serves as a coordination point for ATP.

The protein belongs to the ATPase alpha/beta chains family. In terms of assembly, F-type ATPases have 2 components, CF(1) - the catalytic core - and CF(0) - the membrane proton channel. CF(1) has five subunits: alpha(3), beta(3), gamma(1), delta(1), epsilon(1). CF(0) has three main subunits: a(1), b(2) and c(9-12). The alpha and beta chains form an alternating ring which encloses part of the gamma chain. CF(1) is attached to CF(0) by a central stalk formed by the gamma and epsilon chains, while a peripheral stalk is formed by the delta and b chains.

It is found in the cell membrane. The catalysed reaction is ATP + H2O + 4 H(+)(in) = ADP + phosphate + 5 H(+)(out). In terms of biological role, produces ATP from ADP in the presence of a proton gradient across the membrane. The catalytic sites are hosted primarily by the beta subunits. This Paenarthrobacter aurescens (strain TC1) protein is ATP synthase subunit beta.